The following is a 326-amino-acid chain: Flap endonuclease 1 (326 aa).

The N-domain stretch occupies residues 1 to 100 (MGNADLRSLA…DEVEKRREQR (100 aa)). Mg(2+)-binding residues include aspartate 28, aspartate 82, glutamate 154, glutamate 156, aspartate 175, aspartate 177, and aspartate 225. Residues 118–246 (RVAKLDSRTQ…TAVKDLHEHG (129 aa)) are I-domain. The segment at 318–326 (VQTGLDRWA) is interaction with PCNA.

This sequence belongs to the XPG/RAD2 endonuclease family. FEN1 subfamily. In terms of assembly, interacts with PCNA. PCNA stimulates the nuclease activity without altering cleavage specificity. It depends on Mg(2+) as a cofactor.

Functionally, structure-specific nuclease with 5'-flap endonuclease and 5'-3' exonuclease activities involved in DNA replication and repair. During DNA replication, cleaves the 5'-overhanging flap structure that is generated by displacement synthesis when DNA polymerase encounters the 5'-end of a downstream Okazaki fragment. Binds the unpaired 3'-DNA end and kinks the DNA to facilitate 5' cleavage specificity. Cleaves one nucleotide into the double-stranded DNA from the junction in flap DNA, leaving a nick for ligation. Also involved in the base excision repair (BER) pathway. Acts as a genome stabilization factor that prevents flaps from equilibrating into structures that lead to duplications and deletions. Also possesses 5'-3' exonuclease activity on nicked or gapped double-stranded DNA. The chain is Flap endonuclease 1 from Haloarcula marismortui (strain ATCC 43049 / DSM 3752 / JCM 8966 / VKM B-1809) (Halobacterium marismortui).